We begin with the raw amino-acid sequence, 128 residues long: Large ribosomal subunit protein eL22 (128 aa).

At T62 the chain carries Phosphothreonine. Residue S66 is modified to Phosphoserine. K69 bears the N6-succinyllysine mark.

The protein belongs to the eukaryotic ribosomal protein eL22 family. Component of the large ribosomal subunit.

It localises to the cytoplasm. Component of the large ribosomal subunit. The ribosome is a large ribonucleoprotein complex responsible for the synthesis of proteins in the cell. This Sus scrofa (Pig) protein is Large ribosomal subunit protein eL22 (RPL22).